The primary structure comprises 157 residues: Ribosomal RNA large subunit methyltransferase H (157 aa).

Residues leucine 73, glycine 105, and 124–129 (LSLMTF) each bind S-adenosyl-L-methionine.

It belongs to the RNA methyltransferase RlmH family. As to quaternary structure, homodimer.

The protein resides in the cytoplasm. The catalysed reaction is pseudouridine(1915) in 23S rRNA + S-adenosyl-L-methionine = N(3)-methylpseudouridine(1915) in 23S rRNA + S-adenosyl-L-homocysteine + H(+). In terms of biological role, specifically methylates the pseudouridine at position 1915 (m3Psi1915) in 23S rRNA. This chain is Ribosomal RNA large subunit methyltransferase H, found in Flavobacterium johnsoniae (strain ATCC 17061 / DSM 2064 / JCM 8514 / BCRC 14874 / CCUG 350202 / NBRC 14942 / NCIMB 11054 / UW101) (Cytophaga johnsonae).